A 741-amino-acid chain; its full sequence is Transketolase, chloroplastic (741 aa).

The N-terminal 67 residues, 1-67, are a transit peptide targeting the chloroplast; it reads MASSSSLTLS…TKQQFSVRAS (67 aa). H103 contributes to the substrate binding site. Residues H143 and 192–194 each bind thiamine diphosphate; that span reads GPL. D233 lines the Mg(2+) pocket. The thiamine diphosphate site is built by G234 and N263. Mg(2+) is bound by residues N263 and I265. Residues H340, R434, and S461 each coordinate substrate. H340 lines the thiamine diphosphate pocket. Thiamine diphosphate contacts are provided by E488 and F515. The active-site Proton donor is the E488. Substrate is bound by residues H539, D547, and R598.

This sequence belongs to the transketolase family. In terms of assembly, homodimer. Requires Mg(2+) as cofactor. Ca(2+) serves as cofactor. It depends on Mn(2+) as a cofactor. Co(2+) is required as a cofactor. The cofactor is thiamine diphosphate.

Its subcellular location is the plastid. The protein localises to the chloroplast thylakoid membrane. It carries out the reaction D-sedoheptulose 7-phosphate + D-glyceraldehyde 3-phosphate = aldehydo-D-ribose 5-phosphate + D-xylulose 5-phosphate. It participates in carbohydrate biosynthesis; Calvin cycle. Functionally, catalyzes the reversible transfer of a two-carbon ketol group from fructose-6-phosphate or sedoheptulose-7-phosphate to glyceraldehyde-3-phosphate to yield xylulose-5-phosphate and erythrose-4-phosphate or ribose-5-phosphate, respectively. This is Transketolase, chloroplastic from Solanum tuberosum (Potato).